The sequence spans 110 residues: Endoribonuclease SymE (110 aa).

The 46-residue stretch at 29 to 74 (SRYPDYTRIPALTMKGQWLEAAGFATGTEVDVRVMNGCIVLTAQQP) folds into the SpoVT-AbrB domain.

This sequence belongs to the SymE family.

It localises to the cytoplasm. Its function is as follows. Involved in the degradation and recycling of damaged RNA. It is itself a target for degradation by the ATP-dependent protease Lon. This is Endoribonuclease SymE from Salmonella typhi.